Reading from the N-terminus, the 896-residue chain is Translation initiation factor IF-2 (896 aa).

Positions 46 to 315 (LAHLNRQHGG…FNKPAQPVER (270 aa)) are disordered. Positions 99-247 (SASEEQEREE…RKQQEKEDVH (149 aa)) are enriched in basic and acidic residues. A compositionally biased stretch (basic residues) spans 269–278 (SRKRGKKRRR). Positions 279–288 (KDEESDDTPR) are enriched in basic and acidic residues. The tr-type G domain maps to 396-565 (PRAPVVTVMG…LLQSEVLDLR (170 aa)). The segment at 405–412 (GHVDHGKT) is G1. 405–412 (GHVDHGKT) lines the GTP pocket. Residues 430–434 (GITQH) are G2. The tract at residues 451–454 (DTPG) is G3. GTP-binding positions include 451 to 455 (DTPGH) and 505 to 508 (NKMD). The G4 stretch occupies residues 505 to 508 (NKMD). Residues 541 to 543 (SAH) form a G5 region.

It belongs to the TRAFAC class translation factor GTPase superfamily. Classic translation factor GTPase family. IF-2 subfamily.

The protein localises to the cytoplasm. Functionally, one of the essential components for the initiation of protein synthesis. Protects formylmethionyl-tRNA from spontaneous hydrolysis and promotes its binding to the 30S ribosomal subunits. Also involved in the hydrolysis of GTP during the formation of the 70S ribosomal complex. The protein is Translation initiation factor IF-2 of Idiomarina loihiensis (strain ATCC BAA-735 / DSM 15497 / L2-TR).